Reading from the N-terminus, the 150-residue chain is Large ribosomal subunit protein bL9 (150 aa).

The protein belongs to the bacterial ribosomal protein bL9 family.

Its function is as follows. Binds to the 23S rRNA. This Moorella thermoacetica (strain ATCC 39073 / JCM 9320) protein is Large ribosomal subunit protein bL9.